The following is a 340-amino-acid chain: Coproporphyrin III ferrochelatase (340 aa).

The Fe-coproporphyrin III site is built by serine 52 and tyrosine 116. Fe(2+) is bound by residues histidine 172 and glutamate 255.

It belongs to the ferrochelatase family.

The protein localises to the cytoplasm. It catalyses the reaction Fe-coproporphyrin III + 2 H(+) = coproporphyrin III + Fe(2+). The protein operates within porphyrin-containing compound metabolism; protoheme biosynthesis. Its function is as follows. Involved in coproporphyrin-dependent heme b biosynthesis. Catalyzes the insertion of ferrous iron into coproporphyrin III to form Fe-coproporphyrin III. This chain is Coproporphyrin III ferrochelatase, found in Mycobacterium ulcerans (strain Agy99).